The primary structure comprises 394 residues: Elongation factor Tu 2 (394 aa).

Positions 9–204 (KPHCNIGTIG…SIDDYIPQPT (196 aa)) constitute a tr-type G domain. A G1 region spans residues 18 to 25 (GHVDHGKT). 18–25 (GHVDHGKT) contributes to the GTP binding site. Residue Thr25 participates in Mg(2+) binding. The G2 stretch occupies residues 61–65 (GITIQ). The segment at 82-85 (DCPG) is G3. GTP contacts are provided by residues 82–86 (DCPGH) and 137–140 (NKID). The segment at 137 to 140 (NKID) is G4. The tract at residues 174-176 (SAL) is G5.

The protein belongs to the TRAFAC class translation factor GTPase superfamily. Classic translation factor GTPase family. EF-Tu/EF-1A subfamily. Monomer.

It is found in the cytoplasm. It carries out the reaction GTP + H2O = GDP + phosphate + H(+). Functionally, GTP hydrolase that promotes the GTP-dependent binding of aminoacyl-tRNA to the A-site of ribosomes during protein biosynthesis. The polypeptide is Elongation factor Tu 2 (Orientia tsutsugamushi (strain Boryong) (Rickettsia tsutsugamushi)).